A 589-amino-acid polypeptide reads, in one-letter code: Zinc finger protein 131 (589 aa).

In terms of domain architecture, BTB spans Thr-34–Gly-98. A Nuclear localization signal 1 motif is present at residues Thr-137–Ala-148. Over residues Gly-224–Gly-234 the composition is skewed to basic and acidic residues. The tract at residues Gly-224–Lys-247 is disordered. 2 C2H2-type zinc fingers span residues Phe-254–His-277 and His-294–His-316. Residues Lys-255 and Lys-261 each participate in a glycyl lysine isopeptide (Lys-Gly) (interchain with G-Cter in SUMO2) cross-link. The Nuclear localization signal 2 motif lies at Val-283–His-294. The segment at Phe-322–Gly-347 adopts a C2H2-type 3; degenerate zinc-finger fold. 2 consecutive C2H2-type zinc fingers follow at residues Tyr-358–His-380 and Asn-386–His-409. Residues Asn-539–Thr-583 show a composition bias toward basic and acidic residues. Residues Asn-539–Glu-589 are disordered. Lys-567 participates in a covalent cross-link: Glycyl lysine isopeptide (Lys-Gly) (interchain with G-Cter in SUMO).

Belongs to the krueppel C2H2-type zinc-finger protein family. In terms of processing, monosumoylated at Lys-567 by CBX4 and UHRF2. Sumoylation may potentiate ZNF131 inhibition of estrogen signaling. Sumoylation does not interfere with ubiquitination. Ubiquitinated.

Its subcellular location is the nucleus. Functionally, may be involved in transcriptional regulation as a repressor of ESR1/ER-alpha signaling. Plays a role during development and organogenesis as well as in the function of the adult central nervous system. In Pongo abelii (Sumatran orangutan), this protein is Zinc finger protein 131 (ZNF131).